Here is a 2146-residue protein sequence, read N- to C-terminus: YLP motif-containing protein 1 (2146 aa).

2 disordered regions span residues 1-381 (MYPN…ARLK) and 562-880 (PPVM…FKMQ). Positions 14–26 (YPPPPVPPPPPVA) are enriched in pro residues. 2 stretches are compositionally biased toward low complexity: residues 27–48 (LPEA…PSSS) and 58–79 (LAQL…LQPH). 5 stretches are compositionally biased toward pro residues: residues 80–92 (HLPP…PPVM), 101–113 (QPPP…PPGP), 147–157 (PESPPVPPGSY), 165–175 (MPPPQPPPSYY), and 183–194 (YLPPAQPSPSQS). Over residues 195 to 237 (PPSQSYLAPTPSYSSSSSSSQSYLSHSQSYLPSSQASPSRPSQ) the composition is skewed to low complexity. 2 stretches are compositionally biased toward polar residues: residues 256-279 (NKTT…QQQA) and 286-308 (STMT…LQQR). Basic residues predominate over residues 309–319 (TKVHLPGHKKG). A compositionally biased stretch (basic and acidic residues) spans 325–334 (DTPEPVKEEV). 3 stretches are compositionally biased toward pro residues: residues 349–368 (EEPP…PPEE), 562–579 (PPVM…PGMP), and 586–642 (GPPP…PQGI). The span at 643–663 (PPQLTAAPVPPASSSQSSQVP) shows a compositional bias: low complexity. The segment covering 692 to 702 (AGPSEQVNSKA) has biased composition (polar residues). At lysine 735 the chain carries N6-methyllysine. Position 756 is a phosphoserine (serine 756). A compositionally biased stretch (basic and acidic residues) spans 758 to 806 (RGPRFDGPRRFEDLGSRCEGPRPKGPRFEGNRPDGPRPRYEGHPAEGTK). Arginine 814 bears the Omega-N-methylarginine mark. Composition is skewed to polar residues over residues 820-835 (FYIT…QSGP) and 868-880 (DTSS…FKMQ). Position 829 is a phosphoserine (serine 829). Residue arginine 831 is modified to Omega-N-methylarginine. Residue lysine 891 forms a Glycyl lysine isopeptide (Lys-Gly) (interchain with G-Cter in SUMO2) linkage. Disordered stretches follow at residues 895-1211 (AAQS…GRNA) and 1243-1351 (NRED…DDRW). 2 stretches are compositionally biased toward polar residues: residues 896 to 909 (AQSN…QQEP) and 923 to 933 (NWDQNVQSMET). Lysine 983 participates in a covalent cross-link: Glycyl lysine isopeptide (Lys-Gly) (interchain with G-Cter in SUMO1); alternate. A Glycyl lysine isopeptide (Lys-Gly) (interchain with G-Cter in SUMO2); alternate cross-link involves residue lysine 983. Basic and acidic residues-rich tracts occupy residues 994–1012 (NNQD…RLEG), 1027–1036 (RMEDTRDKGL), and 1053–1093 (KQED…REKV). Lysine 1053 participates in a covalent cross-link: Glycyl lysine isopeptide (Lys-Gly) (interchain with G-Cter in SUMO1); alternate. Residue lysine 1053 forms a Glycyl lysine isopeptide (Lys-Gly) (interchain with G-Cter in SUMO2); alternate linkage. 2 positions are modified to phosphoserine: serine 1100 and serine 1119. 2 stretches are compositionally biased toward basic and acidic residues: residues 1129 to 1211 (GSRE…GRNA) and 1243 to 1264 (NRED…RGPW). Residues 1266 to 1276 (DDWERDQDMDE) are compositionally biased toward acidic residues. The segment covering 1277-1328 (DYNREMERDMDRDVDRISRPMDMYDRSLDNEWDRDYGRPLDEQESQFRERDI) has biased composition (basic and acidic residues). A compositionally biased stretch (pro residues) spans 1330 to 1342 (SLPPLPPLPPLPP). Serine 1402 carries the phosphoserine modification. Disordered regions lie at residues 1407 to 1438 (PSDV…SLDS), 1469 to 1573 (QKEQ…EQER), and 1602 to 1828 (IPSA…PPGR). Residues 1417–1430 (AEHMPSSHHSSEMM) are compositionally biased toward low complexity. Basic and acidic residues predominate over residues 1469-1480 (QKEQLQKMKDFG). Residues 1505 to 1520 (MYPPPGSYRPPPPMGK) are compositionally biased toward pro residues. The span at 1521–1539 (PPGSIVRPSAPPARSSVPV) shows a compositional bias: low complexity. Composition is skewed to pro residues over residues 1540–1562 (TRPP…PPVI) and 1606–1636 (PVLP…PPPV). Lysine 1652 participates in a covalent cross-link: Glycyl lysine isopeptide (Lys-Gly) (interchain with G-Cter in SUMO2). 4 stretches are compositionally biased toward basic and acidic residues: residues 1662 to 1696 (ITLR…EPYF), 1704 to 1774 (ADHR…DRPV), 1783 to 1793 (GERRTYPEERM), and 1809 to 1828 (RVEK…PPGR). Residue lysine 1710 forms a Glycyl lysine isopeptide (Lys-Gly) (interchain with G-Cter in SUMO2) linkage. Residues 2096-2103 (KKRVRWAD) are involved in interaction with PPP1CA.

As to quaternary structure, interacts with PPP1CA and NCOA5. Forms a complex with ILF2, ILF3, KHDRBS1, RBMX, NCOA5 and PPP1CA. In terms of tissue distribution, expressed in neuronal, neuroblastoma and embryonic kidney cell lines (at protein level).

The protein localises to the nucleus. It localises to the nucleus speckle. Functionally, plays a role in the reduction of telomerase activity during differentiation of embryonic stem cells by binding to the core promoter of TERT and controlling its down-regulation. This is YLP motif-containing protein 1 (YLPM1) from Homo sapiens (Human).